An 89-amino-acid chain; its full sequence is Heat shock protein 30A (89 aa).

2 stretches are compositionally biased toward basic and acidic residues: residues 1–11 (MRNNVERRMQR) and 19–39 (LSKD…RESE). The tract at residues 1-55 (MRNNVERRMQRVNEACRLLSKDTEMRRITDQNRQSRESEGTSPNSGKDGKDHFEL) is disordered. The sHSP domain occupies 35–89 (SRESEGTSPNSGKDGKDHFELTLNVRDFSPHELTVKTQGRRVIVTGKHERKSDTE).

Belongs to the small heat shock protein (HSP20) family.

The sequence is that of Heat shock protein 30A (hsp30a) from Xenopus laevis (African clawed frog).